The chain runs to 453 residues: Ribulose bisphosphate carboxylase large chain (453 aa).

A propeptide spanning residues 1–2 is cleaved from the precursor; it reads MS. Residue P3 is modified to N-acetylproline. At K14 the chain carries N6,N6,N6-trimethyllysine. Positions 123 and 173 each coordinate substrate. Catalysis depends on K175, which acts as the Proton acceptor. K177 serves as a coordination point for substrate. K201, D203, and E204 together coordinate Mg(2+). K201 is subject to N6-carboxylysine. The active-site Proton acceptor is the H294. Residues R295, H327, and S379 each contribute to the substrate site.

Belongs to the RuBisCO large chain family. Type I subfamily. Heterohexadecamer of 8 large chains and 8 small chains; disulfide-linked. The disulfide link is formed within the large subunit homodimers. Requires Mg(2+) as cofactor. The disulfide bond which can form in the large chain dimeric partners within the hexadecamer appears to be associated with oxidative stress and protein turnover.

The protein resides in the plastid. The protein localises to the chloroplast. It carries out the reaction 2 (2R)-3-phosphoglycerate + 2 H(+) = D-ribulose 1,5-bisphosphate + CO2 + H2O. It catalyses the reaction D-ribulose 1,5-bisphosphate + O2 = 2-phosphoglycolate + (2R)-3-phosphoglycerate + 2 H(+). RuBisCO catalyzes two reactions: the carboxylation of D-ribulose 1,5-bisphosphate, the primary event in carbon dioxide fixation, as well as the oxidative fragmentation of the pentose substrate in the photorespiration process. Both reactions occur simultaneously and in competition at the same active site. The sequence is that of Ribulose bisphosphate carboxylase large chain from Galium album (White bedstraw).